The chain runs to 270 residues: Interleukin-1 alpha (270 aa).

Residues 1 to 112 constitute a propeptide that is removed on maturation; that stretch reads MAKVPDLFED…EVEEEIMKPR (112 aa). Lys-82 carries the post-translational modification N6-acetyllysine. Residues 82-86 form a nuclear localization signal (NLS) region; the sequence is KKRRL. Ser-87 bears the Phosphoserine mark. Asn-139 carries N-linked (GlcNAc...) asparagine glycosylation.

Belongs to the IL-1 family. Monomer. Interacts with TMED10; the interaction mediates the translocation from the cytoplasm into the ERGIC (endoplasmic reticulum-Golgi intermediate compartment) and thereby secretion. Interacts with IL1R1. Interacts with S100A13; this interaction is the first step in the export of IL1A, followed by direct translocation of this complex across the plasma membrane. In terms of processing, acetylated within its nuclear localization sequence, which impacts subcellular localization. Post-translationally, proteolytic processed by CAPN1 in a calcium-dependent manner. Cleavage from 31 kDa precursor to 18 kDa biologically active molecules. Phosphorylated. Phosphorylation greatly enhances susceptibility to digestion and promotes the conversion of pre-IL1A alpha to the biologically active IL1A.

Its subcellular location is the nucleus. The protein resides in the cytoplasm. It is found in the secreted. Cytokine constitutively present intracellularly in nearly all resting non-hematopoietic cells that plays an important role in inflammation and bridges the innate and adaptive immune systems. After binding to its receptor IL1R1 together with its accessory protein IL1RAP, forms the high affinity interleukin-1 receptor complex. Signaling involves the recruitment of adapter molecules such as MYD88, IRAK1 or IRAK4. In turn, mediates the activation of NF-kappa-B and the three MAPK pathways p38, p42/p44 and JNK pathways. Within the cell, acts as an alarmin and cell death results in its liberation in the extracellular space after disruption of the cell membrane to induce inflammation and alert the host to injury or damage. In addition to its role as a danger signal, which occurs when the cytokine is passively released by cell necrosis, directly senses DNA damage and acts as signal for genotoxic stress without loss of cell integrity. The polypeptide is Interleukin-1 alpha (IL1A) (Felis catus (Cat)).